The sequence spans 341 residues: Serpentine receptor class epsilon-12 (341 aa).

The next 7 helical transmembrane spans lie at 30 to 50 (TAFY…LFSA), 57 to 77 (FTLV…AIIV), 101 to 121 (AMTF…FSIL), 140 to 160 (YISY…AILL), 167 to 187 (IFVV…NQFL), 230 to 250 (LNFI…SVLF), and 262 to 282 (ICSL…PQIM).

Belongs to the nematode receptor-like protein sre family.

The protein localises to the membrane. The protein is Serpentine receptor class epsilon-12 (sre-12) of Caenorhabditis elegans.